Consider the following 138-residue polypeptide: Small ribosomal subunit protein uS11c (138 aa).

The interval 1 to 24 is disordered; sequence MAKPIPKVGSRRNGRSSARKSARR. Residues 9 to 24 are compositionally biased toward basic residues; that stretch reads GSRRNGRSSARKSARR.

Belongs to the universal ribosomal protein uS11 family. As to quaternary structure, part of the 30S ribosomal subunit.

The protein localises to the plastid. Its subcellular location is the chloroplast. This chain is Small ribosomal subunit protein uS11c, found in Gossypium hirsutum (Upland cotton).